A 354-amino-acid polypeptide reads, in one-letter code: UPF0283 protein YcjF (354 aa).

3 helical membrane passes run 71–91 (MVTVGIALFGVSVIAQSVQWV), 101–121 (IALGATTAGGLIVLAGVGSVV), and 214–234 (ESALMIAVSPLALVDMAFIAW).

This sequence belongs to the UPF0283 family.

The protein resides in the cell inner membrane. The protein is UPF0283 protein YcjF (ycjF) of Yersinia enterocolitica.